Reading from the N-terminus, the 1278-residue chain is MTARGLALGLLLLLLCPAQVFSQSCVWYGECGIAYGDKRYNCEYSGPPKPLPKDGYDLVQELCPGFFFGNVSLCCDVRQLQTLKDNLQLPLQFLSRCPSCFYNLLNLFCELTCSPRQSQFLNVTATEDYVDPVTNQTKTNVKELQYYVGQSFANAMYNACRDVEAPSSNDKALGLLCGKDADACNATNWIEYMFNKDNGQAPFTITPVFSDFPVHGMEPMNNATKGCDESVDEVTAPCSCQDCSIVCGPKPQPPPPPAPWTILGLDAMYVIMWITYMAFLLVFFGAFFAVWCYRKRYFVSEYTPIDSNIAFSVNASDKGEASCCDPVSAAFEGCLRRLFTRWGSFCVRNPGCVIFFSLVFITACSSGLVFVRVTTNPVDLWSAPSSQARLEKEYFDQHFGPFFRTEQLIIRAPLTDKHIYQPYPSGADVPFGPPLDIQILHQVLDLQIAIENITASYDNETVTLQDICLAPLSPYNTNCTILSVLNYFQNSHSVLDHKKGDDFFVYADYHTHFLYCVRAPASLNDTSLLHDPCLGTFGGPVFPWLVLGGYDDQNYNNATALVITFPVNNYYNDTEKLQRAQAWEKEFINFVKNYKNPNLTISFTAERSIEDELNRESDSDVFTVVISYAIMFLYISLALGHMKSCRRLLVDSKVSLGIAGILIVLSSVACSLGVFSYIGLPLTLIVIEVIPFLVLAVGVDNIFILVQAYQRDERLQGETLDQQLGRVLGEVAPSMFLSSFSETVAFFLGALSVMPAVHTFSLFAGLAVFIDFLLQITCFVSLLGLDIKRQEKNRLDIFCCVRGAEDGTSVQASESCLFRFFKNSYSPLLLKDWMRPIVIAIFVGVLSFSIAVLNKVDIGLDQSLSMPDDSYMVDYFKSISQYLHAGPPVYFVLEEGHDYTSSKGQNMVCGGMGCNNDSLVQQIFNAAQLDNYTRIGFAPSSWIDDYFDWVKPQSSCCRVDNITDQFCNASVVDPACVRCRPLTPEGKQRPQGGDFMRFLPMFLSDNPNPKCGKGGHAAYSSAVNILLGHGTRVGATYFMTYHTVLQTSADFIDALKKARLIASNVTETMGINGSAYRVFPYSVFYVFYEQYLTIIDDTIFNLGVSLGAIFLVTMVLLGCELWSAVIMCATIAMVLVNMFGVMWLWGISLNAVSLVNLVMSCGISVEFCSHITRAFTVSMKGSRVERAEEALAHMGSSVFSGITLTKFGGIVVLAFAKSQIFQIFYFRMYLAMVLLGATHGLIFLPVLLSYIGPSVNKAKSCATEERYKGTERERLLNF.

The signal sequence occupies residues 1-22 (MTARGLALGLLLLLLCPAQVFS). The Lumenal portion of the chain corresponds to 23 to 261 (QSCVWYGECG…QPPPPPAPWT (239 aa)). Intrachain disulfides connect Cys-25-Cys-74, Cys-31-Cys-42, Cys-63-Cys-109, Cys-75-Cys-113, Cys-97-Cys-238, Cys-100-Cys-160, Cys-177-Cys-184, Cys-227-Cys-243, and Cys-240-Cys-247. Asn-41 is a binding site for cholesterol. Asn-70 is a glycosylation site (N-linked (GlcNAc...) asparagine). Residue Gln-79 participates in cholesterol binding. Asn-122 and Asn-135 each carry an N-linked (GlcNAc...) asparagine glycan. A glycan (N-linked (GlcNAc...) asparagine; atypical) is linked at Asn-158. The segment at 175–205 (LLCGKDADACNATNWIEYMFNKDNGQAPFTI) is important for cholesterol binding and cholesterol transfer from NPC1 to liposomes. 2 N-linked (GlcNAc...) asparagine glycosylation sites follow: Asn-185 and Asn-222. A helical transmembrane segment spans residues 262–282 (ILGLDAMYVIMWITYMAFLLV). Residues 283 to 350 (FFGAFFAVWC…RWGSFCVRNP (68 aa)) lie on the Cytoplasmic side of the membrane. The chain crosses the membrane as a helical span at residues 351–371 (GCVIFFSLVFITACSSGLVFV). At 372–620 (RVTTNPVDLW…DELNRESDSD (249 aa)) the chain is on the lumenal side. Asn-452, Asn-459, Asn-478, Asn-524, Asn-557, Asn-572, and Asn-598 each carry an N-linked (GlcNAc...) asparagine glycan. 2 disulfides stabilise this stretch: Cys-468/Cys-479 and Cys-516/Cys-533. The region spanning 620–785 (DVFTVVISYA…ITCFVSLLGL (166 aa)) is the SSD domain. Residues 621 to 641 (VFTVVISYAIMFLYISLALGH) traverse the membrane as a helical segment. At 642 to 653 (MKSCRRLLVDSK) the chain is on the cytoplasmic side. Residues 654 to 675 (VSLGIAGILIVLSSVACSLGVF) form a helical membrane-spanning segment. The Lumenal portion of the chain corresponds to 676 to 685 (SYIGLPLTLI). Residues 686–706 (VIEVIPFLVLAVGVDNIFILV) form a helical membrane-spanning segment. Over 707 to 730 (QAYQRDERLQGETLDQQLGRVLGE) the chain is Cytoplasmic. A helical transmembrane segment spans residues 731–751 (VAPSMFLSSFSETVAFFLGAL). The Lumenal portion of the chain corresponds to 752 to 759 (SVMPAVHT). Residues 760-783 (FSLFAGLAVFIDFLLQITCFVSLL) form a helical membrane-spanning segment. At 784-832 (GLDIKRQEKNRLDIFCCVRGAEDGTSVQASESCLFRFFKNSYSPLLLKD) the chain is on the cytoplasmic side. The helical transmembrane segment at 833–853 (WMRPIVIAIFVGVLSFSIAVL) threads the bilayer. The Lumenal portion of the chain corresponds to 854–1097 (NKVDIGLDQS…YEQYLTIIDD (244 aa)). Cys-909 and Cys-914 are disulfide-bonded. Residues Asn-916, Asn-931, Asn-961, Asn-968, Asn-1064, and Asn-1072 are each glycosylated (N-linked (GlcNAc...) asparagine). 3 disulfide bridges follow: Cys-956/Cys-1011, Cys-957/Cys-979, and Cys-967/Cys-976. A helical membrane pass occupies residues 1098 to 1118 (TIFNLGVSLGAIFLVTMVLLG). The Cytoplasmic segment spans residues 1119–1124 (CELWSA). The helical transmembrane segment at 1125 to 1145 (VIMCATIAMVLVNMFGVMWLW) threads the bilayer. The Lumenal portion of the chain corresponds to 1146–1150 (GISLN). Residues 1151-1171 (AVSLVNLVMSCGISVEFCSHI) form a helical membrane-spanning segment. Over 1172 to 1194 (TRAFTVSMKGSRVERAEEALAHM) the chain is Cytoplasmic. Residues 1195 to 1215 (GSSVFSGITLTKFGGIVVLAF) traverse the membrane as a helical segment. The Lumenal portion of the chain corresponds to 1216 to 1223 (AKSQIFQI). Residues 1224–1244 (FYFRMYLAMVLLGATHGLIFL) form a helical membrane-spanning segment. At 1245–1278 (PVLLSYIGPSVNKAKSCATEERYKGTERERLLNF) the chain is on the cytoplasmic side. A required for location in lysosomes region spans residues 1275–1278 (LLNF). Residues 1275 to 1278 (LLNF) carry the Di-leucine motif motif.

Belongs to the patched family. Interacts (via the second lumenal domain) with NPC2. Interacts with TMEM97; the interaction may decrease NPC1 availability to the cell. Interacts with TIM1. Interacts with SLC38A9; this interaction inhibits cholesterol-mediated mTORC1 activation via its sterol transport activity. As to quaternary structure, (Microbial infection) Interacts with ebolavirus glycoprotein. In terms of processing, N-glycosylated.

It localises to the late endosome membrane. The protein resides in the lysosome membrane. The catalysed reaction is cholesterol(in) = cholesterol(out). Functionally, intracellular cholesterol transporter which acts in concert with NPC2 and plays an important role in the egress of cholesterol from the endosomal/lysosomal compartment. Unesterified cholesterol that has been released from LDLs in the lumen of the late endosomes/lysosomes is transferred by NPC2 to the cholesterol-binding pocket in the N-terminal domain of NPC1. Cholesterol binds to NPC1 with the hydroxyl group buried in the binding pocket. Binds oxysterol with higher affinity than cholesterol. May play a role in vesicular trafficking in glia, a process that may be crucial for maintaining the structural and functional integrity of nerve terminals. Inhibits cholesterol-mediated mTORC1 activation throught its interaction with SLC38A9. Its function is as follows. (Microbial infection) Acts as an endosomal entry receptor for ebolavirus. In Homo sapiens (Human), this protein is NPC intracellular cholesterol transporter 1.